The chain runs to 238 residues: Adapter protein MecA (238 aa).

Residues 108-133 (EDENEESVQGNQQQRRSHASDHSKRA) form a disordered region.

This sequence belongs to the MecA family. As to quaternary structure, homodimer.

Enables the recognition and targeting of unfolded and aggregated proteins to the ClpC protease or to other proteins involved in proteolysis. This Staphylococcus carnosus (strain TM300) protein is Adapter protein MecA.